A 372-amino-acid polypeptide reads, in one-letter code: Aminomethyltransferase (372 aa).

The protein belongs to the GcvT family. The glycine cleavage system is composed of four proteins: P, T, L and H.

It carries out the reaction N(6)-[(R)-S(8)-aminomethyldihydrolipoyl]-L-lysyl-[protein] + (6S)-5,6,7,8-tetrahydrofolate = N(6)-[(R)-dihydrolipoyl]-L-lysyl-[protein] + (6R)-5,10-methylene-5,6,7,8-tetrahydrofolate + NH4(+). Functionally, the glycine cleavage system catalyzes the degradation of glycine. This chain is Aminomethyltransferase, found in Paraburkholderia phymatum (strain DSM 17167 / CIP 108236 / LMG 21445 / STM815) (Burkholderia phymatum).